Reading from the N-terminus, the 1016-residue chain is C2 domain-containing protein 5 (1016 aa).

The region spanning 1–109 (MPGKLKVKIV…EAATVISGWF (109 aa)) is the C2 domain. The Ca(2+) site is built by Asp-19, Asp-26, Asp-76, Asp-78, Ser-81, and Asp-84. Ser-197 is modified (phosphoserine; by PKB/AKT2). 2 positions are modified to phosphoserine: Ser-200 and Ser-260. Residues 265–330 (LKEIPFNEDP…SGSAGKEGGP (66 aa)) form a disordered region. Positions 274–289 (PNPNTHSSGPSTPLKN) are enriched in polar residues. Over residues 290 to 318 (QTYSFSPSKSYSRQSSSSDTDLSLTPKTG) the composition is skewed to low complexity. Phosphoserine occurs at positions 293, 295, 304, 305, and 306. A Phosphothreonine modification is found at Thr-317. A compositionally biased stretch (gly residues) spans 319 to 328 (MGSGSAGKEG). Ser-323 bears the Phosphoserine mark. Position 601 is a phosphothreonine (Thr-601). The interval 636–668 (VSEEMIGSPIPEPRQRSRLLRSQSESSDEVTEL) is disordered. A phosphoserine mark is found at Ser-643, Ser-657, Ser-659, Ser-661, and Ser-662. The residue at position 666 (Thr-666) is a Phosphothreonine. A phosphoserine mark is found at Ser-671, Ser-817, and Ser-869.

The cofactor is Ca(2+). Phosphorylated on Ser-197 by active myristoylated kinase AKT2; insulin-stimulated phosphorylation by AKT2 regulates SLC2A4/GLUT4 translocation into the plasma membrane. Expressed in liver, muscle and fat.

It localises to the cytoplasmic vesicle membrane. Its subcellular location is the cytoplasm. The protein resides in the cell cortex. It is found in the cell membrane. The protein localises to the cell projection. It localises to the ruffle. Functionally, required for insulin-stimulated glucose transport and glucose transporter SLC2A4/GLUT4 translocation from intracellular glucose storage vesicle (GSV) to the plasma membrane (PM) in adipocytes. Binds phospholipid membranes in a calcium-dependent manner and is necessary for the optimal membrane fusion between SLC2A4/GLUT4 GSV and the PM. In Mus musculus (Mouse), this protein is C2 domain-containing protein 5 (C2cd5).